The following is a 158-amino-acid chain: G-protein-signaling modulator 3 (158 aa).

The interval 1 to 53 (MEAERPQEDGEQSLPQDDQGWPPVNSTARPWRSAPPSPPPPGTRHTALGPRSG) is disordered. 2 positions are modified to phosphoserine: S33 and S37. Positions 33–42 (SAPPSPPPPG) are enriched in pro residues. The segment covering 43–53 (TRHTALGPRSG) has biased composition (low complexity). Phosphoserine is present on residues S54 and S57. The residue at position 60 (T60) is a Phosphothreonine. The GoLoco 1 domain occupies 60–82 (TELLLDLVAEAQSRRLEEQRAAF). The interval 78-97 (QRAAFHTPKVPPSLAPTPPR) is disordered. Residues 86–96 (KVPPSLAPTPP) are compositionally biased toward pro residues. 2 GoLoco domains span residues 102–124 (KEQL…RSDP) and 130–153 (GQEL…RSRP).

It is found in the cytoplasm. Functionally, interacts with subunit of G(i) alpha proteins and regulates the activation of G(i) alpha proteins. This is G-protein-signaling modulator 3 (Gpsm3) from Rattus norvegicus (Rat).